The primary structure comprises 260 residues: MAMQFYASPEQIMRDRSELARKGIARGRSAVVLSYAGGVLFVAENLSSALHKVGEIYDRIGFAAVGRYNEFENLRRAGVRMADLNGLSYDRRDVTGRALANSFAQTLGAIFTEQSKPFEVEICVAQVGVTAEDDELYRLTYDGSVNDEPGRMAMGGQAEAIAGALKSNHRSDMSLGDAVKVAVRALGSVGGEGGAARTIAADQLEVAILDRHRDGRTFRRVTGAALTALLDDGAAAASTDAPAAAADSADVEERPDSEAP.

A compositionally biased stretch (low complexity) spans 237–248 (ASTDAPAAAADS). Residues 237 to 260 (ASTDAPAAAADSADVEERPDSEAP) are disordered. Residues 251–260 (VEERPDSEAP) show a composition bias toward basic and acidic residues.

This sequence belongs to the peptidase T1A family. As to quaternary structure, the 20S proteasome core is composed of 14 alpha and 14 beta subunits that assemble into four stacked heptameric rings, resulting in a barrel-shaped structure. The two inner rings, each composed of seven catalytic beta subunits, are sandwiched by two outer rings, each composed of seven alpha subunits. The catalytic chamber with the active sites is on the inside of the barrel. Has a gated structure, the ends of the cylinder being occluded by the N-termini of the alpha-subunits. Is capped by the proteasome-associated ATPase, ARC.

The protein resides in the cytoplasm. Its pathway is protein degradation; proteasomal Pup-dependent pathway. With respect to regulation, the formation of the proteasomal ATPase ARC-20S proteasome complex, likely via the docking of the C-termini of ARC into the intersubunit pockets in the alpha-rings, may trigger opening of the gate for substrate entry. Interconversion between the open-gate and close-gate conformations leads to a dynamic regulation of the 20S proteasome proteolysis activity. Functionally, component of the proteasome core, a large protease complex with broad specificity involved in protein degradation. The protein is Proteasome subunit alpha of Salinispora tropica (strain ATCC BAA-916 / DSM 44818 / JCM 13857 / NBRC 105044 / CNB-440).